We begin with the raw amino-acid sequence, 377 residues long: Spermidine/putrescine import ATP-binding protein PotA (377 aa).

Residues 22–252 form the ABC transporter domain; that stretch reads VRLQNVTKRF…PANRFVADFI (231 aa). 54–61 is an ATP binding site; the sequence is GPSGCGKT.

Belongs to the ABC transporter superfamily. Spermidine/putrescine importer (TC 3.A.1.11.1) family. As to quaternary structure, the complex is composed of two ATP-binding proteins (PotA), two transmembrane proteins (PotB and PotC) and a solute-binding protein (PotD).

It localises to the cell membrane. It catalyses the reaction ATP + H2O + polyamine-[polyamine-binding protein]Side 1 = ADP + phosphate + polyamineSide 2 + [polyamine-binding protein]Side 1.. In terms of biological role, part of the ABC transporter complex PotABCD involved in spermidine/putrescine import. Responsible for energy coupling to the transport system. This is Spermidine/putrescine import ATP-binding protein PotA from Rubrobacter xylanophilus (strain DSM 9941 / JCM 11954 / NBRC 16129 / PRD-1).